A 109-amino-acid chain; its full sequence is Large ribosomal subunit protein P1 (109 aa).

The disordered stretch occupies residues 90–109; it reads AAAKKEEEEEDDDMGFGLFD.

The protein belongs to the eukaryotic ribosomal protein P1/P2 family. P1 and P2 exist as dimers at the large ribosomal subunit.

In terms of biological role, plays an important role in the elongation step of protein synthesis. The chain is Large ribosomal subunit protein P1 from Trypanosoma cruzi.